Here is a 240-residue protein sequence, read N- to C-terminus: UDP-2,3-diacylglucosamine hydrolase (240 aa).

Residues Asp8, His10, Asp41, Asn79, and His114 each contribute to the Mn(2+) site. 79–80 (NR) provides a ligand contact to substrate. Asp122, Ser160, Asn164, Lys167, and His195 together coordinate substrate. Positions 195 and 197 each coordinate Mn(2+).

This sequence belongs to the LpxH family. Requires Mn(2+) as cofactor.

It localises to the cell inner membrane. The enzyme catalyses UDP-2-N,3-O-bis[(3R)-3-hydroxytetradecanoyl]-alpha-D-glucosamine + H2O = 2-N,3-O-bis[(3R)-3-hydroxytetradecanoyl]-alpha-D-glucosaminyl 1-phosphate + UMP + 2 H(+). Its pathway is glycolipid biosynthesis; lipid IV(A) biosynthesis; lipid IV(A) from (3R)-3-hydroxytetradecanoyl-[acyl-carrier-protein] and UDP-N-acetyl-alpha-D-glucosamine: step 4/6. In terms of biological role, hydrolyzes the pyrophosphate bond of UDP-2,3-diacylglucosamine to yield 2,3-diacylglucosamine 1-phosphate (lipid X) and UMP by catalyzing the attack of water at the alpha-P atom. Involved in the biosynthesis of lipid A, a phosphorylated glycolipid that anchors the lipopolysaccharide to the outer membrane of the cell. This Salmonella arizonae (strain ATCC BAA-731 / CDC346-86 / RSK2980) protein is UDP-2,3-diacylglucosamine hydrolase.